Reading from the N-terminus, the 456-residue chain is Bifunctional protein GlmU (456 aa).

The interval 1–231 (MERTCLAIIL…EEELTGCNTR (231 aa)) is pyrophosphorylase. Residues 10–13 (LAAG), lysine 24, glutamine 77, and 82–83 (GT) contribute to the UDP-N-acetyl-alpha-D-glucosamine site. Aspartate 107 is a Mg(2+) binding site. UDP-N-acetyl-alpha-D-glucosamine is bound by residues glycine 143, glutamate 157, asparagine 172, and asparagine 229. Mg(2+) is bound at residue asparagine 229. Residues 232-252 (AELAYIERLWQQRRRQELMLA) form a linker region. Residues 253 to 456 (GVSMVAPETV…AARKKVKAAE (204 aa)) are N-acetyltransferase. Arginine 318 and lysine 336 together coordinate UDP-N-acetyl-alpha-D-glucosamine. Histidine 348 (proton acceptor) is an active-site residue. 2 residues coordinate UDP-N-acetyl-alpha-D-glucosamine: tyrosine 351 and asparagine 362. Acetyl-CoA-binding positions include alanine 365, 371 to 372 (NY), serine 390, serine 408, and arginine 425.

This sequence in the N-terminal section; belongs to the N-acetylglucosamine-1-phosphate uridyltransferase family. The protein in the C-terminal section; belongs to the transferase hexapeptide repeat family. In terms of assembly, homotrimer. The cofactor is Mg(2+).

It localises to the cytoplasm. The catalysed reaction is alpha-D-glucosamine 1-phosphate + acetyl-CoA = N-acetyl-alpha-D-glucosamine 1-phosphate + CoA + H(+). It carries out the reaction N-acetyl-alpha-D-glucosamine 1-phosphate + UTP + H(+) = UDP-N-acetyl-alpha-D-glucosamine + diphosphate. Its pathway is nucleotide-sugar biosynthesis; UDP-N-acetyl-alpha-D-glucosamine biosynthesis; N-acetyl-alpha-D-glucosamine 1-phosphate from alpha-D-glucosamine 6-phosphate (route II): step 2/2. The protein operates within nucleotide-sugar biosynthesis; UDP-N-acetyl-alpha-D-glucosamine biosynthesis; UDP-N-acetyl-alpha-D-glucosamine from N-acetyl-alpha-D-glucosamine 1-phosphate: step 1/1. It functions in the pathway bacterial outer membrane biogenesis; LPS lipid A biosynthesis. Catalyzes the last two sequential reactions in the de novo biosynthetic pathway for UDP-N-acetylglucosamine (UDP-GlcNAc). The C-terminal domain catalyzes the transfer of acetyl group from acetyl coenzyme A to glucosamine-1-phosphate (GlcN-1-P) to produce N-acetylglucosamine-1-phosphate (GlcNAc-1-P), which is converted into UDP-GlcNAc by the transfer of uridine 5-monophosphate (from uridine 5-triphosphate), a reaction catalyzed by the N-terminal domain. The protein is Bifunctional protein GlmU of Sinorhizobium fredii (strain NBRC 101917 / NGR234).